A 464-amino-acid polypeptide reads, in one-letter code: Siroheme synthase (464 aa).

The tract at residues 1 to 203 (MKYLPLFHNL…GQGAEAERLL (203 aa)) is precorrin-2 dehydrogenase /sirohydrochlorin ferrochelatase. NAD(+) is bound by residues 22–23 (EI) and 43–44 (PE). Serine 128 is modified (phosphoserine). The interval 216–464 (GEVYLVGAGP…AWFEGAQGQI (249 aa)) is uroporphyrinogen-III C-methyltransferase. Proline 225 lines the S-adenosyl-L-methionine pocket. Aspartate 248 acts as the Proton acceptor in catalysis. The active-site Proton donor is the lysine 270. S-adenosyl-L-methionine contacts are provided by residues 301–303 (GGD), isoleucine 306, 331–332 (TA), methionine 383, and glycine 412.

In the N-terminal section; belongs to the precorrin-2 dehydrogenase / sirohydrochlorin ferrochelatase family. The protein in the C-terminal section; belongs to the precorrin methyltransferase family.

The enzyme catalyses uroporphyrinogen III + 2 S-adenosyl-L-methionine = precorrin-2 + 2 S-adenosyl-L-homocysteine + H(+). It catalyses the reaction precorrin-2 + NAD(+) = sirohydrochlorin + NADH + 2 H(+). The catalysed reaction is siroheme + 2 H(+) = sirohydrochlorin + Fe(2+). The protein operates within cofactor biosynthesis; adenosylcobalamin biosynthesis; precorrin-2 from uroporphyrinogen III: step 1/1. Its pathway is cofactor biosynthesis; adenosylcobalamin biosynthesis; sirohydrochlorin from precorrin-2: step 1/1. It functions in the pathway porphyrin-containing compound metabolism; siroheme biosynthesis; precorrin-2 from uroporphyrinogen III: step 1/1. It participates in porphyrin-containing compound metabolism; siroheme biosynthesis; siroheme from sirohydrochlorin: step 1/1. The protein operates within porphyrin-containing compound metabolism; siroheme biosynthesis; sirohydrochlorin from precorrin-2: step 1/1. Its function is as follows. Multifunctional enzyme that catalyzes the SAM-dependent methylations of uroporphyrinogen III at position C-2 and C-7 to form precorrin-2 via precorrin-1. Then it catalyzes the NAD-dependent ring dehydrogenation of precorrin-2 to yield sirohydrochlorin. Finally, it catalyzes the ferrochelation of sirohydrochlorin to yield siroheme. The chain is Siroheme synthase from Pseudomonas fluorescens (strain Pf0-1).